A 464-amino-acid chain; its full sequence is Kynureninase (464 aa).

Met1 carries the post-translational modification N-acetylmethionine. Residues Leu137, Thr138, 165-168, Ser221, Asp250, His253, and Tyr275 contribute to the pyridoxal 5'-phosphate site; that span reads FPSD. Lys276 is subject to N6-(pyridoxal phosphate)lysine. Pyridoxal 5'-phosphate is bound by residues Trp305 and Asn333.

This sequence belongs to the kynureninase family. In terms of assembly, homodimer. Requires pyridoxal 5'-phosphate as cofactor. As to expression, high levels in liver and kidney. Also detected in heart, retina, ovary. Lung, testis and brain.

The protein resides in the cytoplasm. The protein localises to the cytosol. The catalysed reaction is L-kynurenine + H2O = anthranilate + L-alanine + H(+). The enzyme catalyses 3-hydroxy-L-kynurenine + H2O = 3-hydroxyanthranilate + L-alanine + H(+). The protein operates within amino-acid degradation; L-kynurenine degradation; L-alanine and anthranilate from L-kynurenine: step 1/1. It participates in cofactor biosynthesis; NAD(+) biosynthesis; quinolinate from L-kynurenine: step 2/3. With respect to regulation, inhibited by o-methylbenzoylalanine (OMBA). Functionally, catalyzes the cleavage of L-kynurenine (L-Kyn) and L-3-hydroxykynurenine (L-3OHKyn) into anthranilic acid (AA) and 3-hydroxyanthranilic acid (3-OHAA), respectively. Has a preference for the L-3-hydroxy form. Also has cysteine-conjugate-beta-lyase activity. This Rattus norvegicus (Rat) protein is Kynureninase (Kynu).